Consider the following 359-residue polypeptide: Peptide chain release factor 1 (359 aa).

Position 235 is an N5-methylglutamine (Q235). Positions 280-306 (AERQRADSERSADRKSQVGSGDRSERI) are disordered.

This sequence belongs to the prokaryotic/mitochondrial release factor family. Methylated by PrmC. Methylation increases the termination efficiency of RF1.

The protein resides in the cytoplasm. Its function is as follows. Peptide chain release factor 1 directs the termination of translation in response to the peptide chain termination codons UAG and UAA. The protein is Peptide chain release factor 1 of Rhizobium johnstonii (strain DSM 114642 / LMG 32736 / 3841) (Rhizobium leguminosarum bv. viciae).